Consider the following 326-residue polypeptide: Arabinose 5-phosphate isomerase KdsD (326 aa).

The SIS domain occupies Ala-38–Phe-181. Substrate-binding positions include Gly-72–Thr-73, His-79, His-85, Thr-111–Gly-120, and Ser-145–Gly-147. A Zn(2+)-binding site is contributed by His-79. CBS domains follow at residues Met-207–Val-265 and Met-274–Met-326.

The protein belongs to the SIS family. GutQ/KpsF subfamily. As to quaternary structure, homotetramer.

The catalysed reaction is D-arabinose 5-phosphate = D-ribulose 5-phosphate. It participates in carbohydrate biosynthesis; 3-deoxy-D-manno-octulosonate biosynthesis; 3-deoxy-D-manno-octulosonate from D-ribulose 5-phosphate: step 1/3. It functions in the pathway bacterial outer membrane biogenesis; lipopolysaccharide biosynthesis. Involved in the biosynthesis of 3-deoxy-D-manno-octulosonate (KDO), a unique 8-carbon sugar component of lipopolysaccharides (LPSs). Catalyzes the reversible aldol-ketol isomerization between D-ribulose 5-phosphate (Ru5P) and D-arabinose 5-phosphate (A5P). This chain is Arabinose 5-phosphate isomerase KdsD (kdsD), found in Pseudomonas aeruginosa (strain ATCC 15692 / DSM 22644 / CIP 104116 / JCM 14847 / LMG 12228 / 1C / PRS 101 / PAO1).